A 128-amino-acid chain; its full sequence is Small ribosomal subunit protein eS8 (128 aa).

This sequence belongs to the eukaryotic ribosomal protein eS8 family. In terms of assembly, part of the 30S ribosomal subunit.

The sequence is that of Small ribosomal subunit protein eS8 from Methanococcus maripaludis (strain C5 / ATCC BAA-1333).